Here is a 189-residue protein sequence, read N- to C-terminus: UPF0688 protein C1orf174 homolog (189 aa).

Residues 53-137 are disordered; that stretch reads QMAGDGGEAK…TTDPSVFFDE (85 aa). Basic and acidic residues-rich tracts occupy residues 59–73 and 93–103; these read GEAKRLPKRPFHGEV and APGERRGKENS.

This sequence belongs to the UPF0688 family.

The protein resides in the nucleus. This is UPF0688 protein C1orf174 homolog from Danio rerio (Zebrafish).